The chain runs to 199 residues: Large ribosomal subunit protein mL51 (199 aa).

Residues 1–15 (MNSNSLSRFTSIVRT) constitute a mitochondrion transit peptide.

Belongs to the mitochondrion-specific ribosomal protein mL51 family. In terms of assembly, component of the mitochondrial ribosome large subunit (39S) which comprises a 16S rRNA and about 50 distinct proteins.

It localises to the mitochondrion. This Caenorhabditis elegans protein is Large ribosomal subunit protein mL51 (mrpl-51).